Here is a 236-residue protein sequence, read N- to C-terminus: 7-cyano-7-deazaguanine synthase (236 aa).

An ATP-binding site is contributed by 13–23 (FSGGQDSTVCL). Positions 200, 215, 218, and 221 each coordinate Zn(2+).

Belongs to the QueC family. It depends on Zn(2+) as a cofactor.

The catalysed reaction is 7-carboxy-7-deazaguanine + NH4(+) + ATP = 7-cyano-7-deazaguanine + ADP + phosphate + H2O + H(+). It functions in the pathway purine metabolism; 7-cyano-7-deazaguanine biosynthesis. Its function is as follows. Catalyzes the ATP-dependent conversion of 7-carboxy-7-deazaguanine (CDG) to 7-cyano-7-deazaguanine (preQ(0)). This Parvibaculum lavamentivorans (strain DS-1 / DSM 13023 / NCIMB 13966) protein is 7-cyano-7-deazaguanine synthase.